Consider the following 336-residue polypeptide: Antigen-presenting glycoprotein CD1d1 (336 aa).

The first 21 residues, 1–21, serve as a signal peptide directing secretion; that stretch reads MRYLPWLLLWAFLQVWGQSEA. Topologically, residues 22–305 are extracellular; that stretch reads QQKNYTFRCL…YWDARQAPVG (284 aa). Asn25, Asn38, and Asn60 each carry an N-linked (GlcNAc...) asparagine glycan. Asp98 provides a ligand contact to a D-galactosylceramide. 2 cysteine pairs are disulfide-bonded: Cys122/Cys186 and Cys226/Cys281. Residue Asn128 is glycosylated (N-linked (GlcNAc...) asparagine). 171–174 provides a ligand contact to a D-galactosylceramide; sequence DQGT. A glycan (N-linked (GlcNAc...) asparagine) is linked at Asn183. The Ig-like domain maps to 207–297; that stretch reads PVAWLSSVPS…LGGQDIILYW (91 aa). A helical transmembrane segment spans residues 306-326; that stretch reads LIVFIVLIMLVVVGAVVYYIW. At 327 to 336 the chain is on the cytoplasmic side; it reads RRRSAYQDIR. The Internalization signal signature appears at 332–335; that stretch reads YQDI.

In terms of assembly, heterodimer with B2M (beta-2-microglobulin). Interacts with MHC II and CD74. Post-translationally, N-glycosylated. As to expression, expressed on cortical thymocytes, on certain T-cell leukemias, and in various other tissues.

The protein localises to the cell membrane. The protein resides in the endosome membrane. Its subcellular location is the lysosome membrane. Antigen-presenting protein that binds self and non-self glycolipids and presents them to T-cell receptors on natural killer T-cells. The chain is Antigen-presenting glycoprotein CD1d1 (Cd1d1) from Mus musculus (Mouse).